Here is a 244-residue protein sequence, read N- to C-terminus: Sperm-egg fusion protein Juno (244 aa).

Residues 1 to 19 (MAQWWQILLGLWAVLPTLA) form the signal peptide. Intrachain disulfides connect cysteine 27–cysteine 55, cysteine 47–cysteine 95, cysteine 56–cysteine 99, cysteine 79–cysteine 166, cysteine 86–cysteine 137, cysteine 126–cysteine 200, cysteine 130–cysteine 180, and cysteine 143–cysteine 160. Positions 62–81 (WEAHLEEPLLFNFSMMHCGL) are important for interaction with IZUMO1. The N-linked (GlcNAc...) asparagine glycan is linked to asparagine 73. The N-linked (GlcNAc...) asparagine glycan is linked to asparagine 185. A lipid anchor (GPI-anchor amidated glycine) is attached at glycine 222. The propeptide occupies 223–244 (SALAPQLSYTLPAFSLCLLFHP).

It belongs to the folate receptor family. In terms of assembly, monomer. Interacts with IZUMO1; the interaction is direct. IZUMO1 and IZUMO1R/JUNO form a complex with 1:1 stoichiometry. Interacts with WDR54. The protein is rapidly cleaved following fertilization, being only weakly detectable in zona-intact fertilized eggs at telophase II and undetectable at the pronuclear stage. Sheding is probably required to block to polyspermy and ensuring egg fusion with a single sperm. Widely expressed with higher expression in thymus, spleen and lung. Present at the cell surface of unfertilized oocytes, while it is barely detectable 30 to 40 minutes after fertilization (at protein level).

It is found in the cell membrane. Functionally, receptor for IZUMO1 present at the cell surface of oocytes (oolemma), which is essential for species-specific gamete recognition and fertilization. The IZUMO1:IZUMO1R/JUNO interaction is a necessary adhesion event between sperm and egg that is required for fertilization but is not sufficient for cell fusion. The ligand-receptor interaction probably does not act as a membrane 'fusogen'. Does not bind folate. The protein is Sperm-egg fusion protein Juno of Mus musculus (Mouse).